The primary structure comprises 725 residues: IML2-like protein SCY_3392 (725 aa).

Thr-196 is modified (phosphothreonine). Residues Ser-246, Ser-377, and Ser-380 each carry the phosphoserine modification.

Belongs to the IML2 family.

The protein resides in the cytoplasm. Its subcellular location is the nucleus. In terms of biological role, may be involved in mitochondrial DNA stability. The polypeptide is IML2-like protein SCY_3392 (Saccharomyces cerevisiae (strain YJM789) (Baker's yeast)).